A 200-amino-acid chain; its full sequence is MNNKKSTNVVWQETKIKRQNREKMLKQKGAVLWFTGLSGSGKSTVASALEKKLYEMGYLTYLLDGDNLRYGLNSDLGFKSEDRTENIRRVSEVAKLFADAGIITITTFISPFIEDRNNARKLLGKDFVEVYIDCPIEVCEKRDPKGIYKKARNGEIKNFTGIDSPYEKPEKPEITVETYKDTEEKCVDNIIEYLKQHKIL.

Residue 36–43 participates in ATP binding; it reads GLSGSGKS. Residue serine 110 is the Phosphoserine intermediate of the active site.

This sequence belongs to the APS kinase family.

The catalysed reaction is adenosine 5'-phosphosulfate + ATP = 3'-phosphoadenylyl sulfate + ADP + H(+). It participates in sulfur metabolism; hydrogen sulfide biosynthesis; sulfite from sulfate: step 2/3. Catalyzes the synthesis of activated sulfate. This is Adenylyl-sulfate kinase from Clostridium acetobutylicum (strain ATCC 824 / DSM 792 / JCM 1419 / IAM 19013 / LMG 5710 / NBRC 13948 / NRRL B-527 / VKM B-1787 / 2291 / W).